A 746-amino-acid polypeptide reads, in one-letter code: WD repeat-containing and planar cell polarity effector protein fritz homolog (746 aa).

WD repeat units lie at residues 326 to 374 (IQCV…TLLA) and 375 to 414 (QTELLPSLISCHPSGAILLVGSNQGELQIFDMALSPINIQ).

The protein belongs to the WD repeat fritz family. Component of the CPLANE (ciliogenesis and planar polarity effectors) complex, composed of INTU, FUZ and WDPCP. Interacts with CPLANE1.

Its subcellular location is the cell membrane. The protein localises to the cytoplasm. The protein resides in the cytoskeleton. It is found in the cilium axoneme. It localises to the cilium basal body. In terms of biological role, probable effector of the planar cell polarity signaling pathway which regulates the septin cytoskeleton in both ciliogenesis and collective cell movements. Together with FUZ and WDPCP proposed to function as core component of the CPLANE (ciliogenesis and planar polarity effectors) complex involved in the recruitment of peripheral IFT-A proteins to basal bodies. Binds phosphatidylinositol 3-phosphate with highest affinity, followed by phosphatidylinositol 4-phosphate and phosphatidylinositol 5-phosphate. In Homo sapiens (Human), this protein is WD repeat-containing and planar cell polarity effector protein fritz homolog (WDPCP).